The following is a 465-amino-acid chain: Hepatocyte nuclear factor 6 (465 aa).

4 disordered regions span residues 17–55, 120–141, 264–290, and 442–465; these read SHEP…SMGM, DKFP…HQRL, LLGT…GQME, and DKWQ…CTKA. The span at 123 to 140 shows a compositional bias: basic residues; that stretch reads PHHHHHHHHHHHPHHHQR. Polar residues predominate over residues 273-288; it reads PSVTGAQVSNGSNSGQ. Residues 283 to 369 constitute a DNA-binding region (CUT); that stretch reads GSNSGQMEEI…QRMSALRLAA (87 aa). Residues 385–444 constitute a DNA-binding region (homeobox); sequence PKKPRLVFTDVQRRTLHAIFKENKRPSKELQITISQQLGLELSTVSNFFMNARRRSLDKW. Low complexity predominate over residues 448–465; sequence GSSNSGNSSSSSSTCTKA.

This sequence belongs to the CUT homeobox family. In terms of assembly, binds DNA as a monomer. Highly expressed in liver; lower expression in testis and skin.

The protein localises to the nucleus. In terms of biological role, transcriptional activator. Binds the consensus sequence 5'-DHWATTGAYTWWD-3' on a variety of gene promoters such as those of HNF3B and TTR. Important for liver genes transcription. This chain is Hepatocyte nuclear factor 6 (ONECUT1), found in Homo sapiens (Human).